We begin with the raw amino-acid sequence, 148 residues long: MKLHELKNVKGAVHRKKRVGCGEGGGHGKTSGRGGKGQTARSGSSIRPGFEGGQMPLYRKLPHRGFNQYNFRTELPVVNVGDLASLDASITEVTAEVLAAQGLIRAGETSVKILGDGELSRALKVTAVKFSESAKAKIEKAGGQAITA.

The tract at residues 14–54 (HRKKRVGCGEGGGHGKTSGRGGKGQTARSGSSIRPGFEGGQ) is disordered. Residues 21–37 (CGEGGGHGKTSGRGGKG) are compositionally biased toward gly residues.

This sequence belongs to the universal ribosomal protein uL15 family. As to quaternary structure, part of the 50S ribosomal subunit.

In terms of biological role, binds to the 23S rRNA. The polypeptide is Large ribosomal subunit protein uL15 (Opitutus terrae (strain DSM 11246 / JCM 15787 / PB90-1)).